Reading from the N-terminus, the 176-residue chain is Ribosome maturation factor RimM (176 aa).

A PRC barrel domain is found at 97 to 176 (EDDFYWRDLI…QICVDWDPGF (80 aa)).

It belongs to the RimM family. Binds ribosomal protein uS19.

It localises to the cytoplasm. An accessory protein needed during the final step in the assembly of 30S ribosomal subunit, possibly for assembly of the head region. Essential for efficient processing of 16S rRNA. May be needed both before and after RbfA during the maturation of 16S rRNA. It has affinity for free ribosomal 30S subunits but not for 70S ribosomes. This is Ribosome maturation factor RimM from Colwellia psychrerythraea (strain 34H / ATCC BAA-681) (Vibrio psychroerythus).